Here is a 577-residue protein sequence, read N- to C-terminus: Monooxygenase PC-14 (577 aa).

It belongs to the FMO family. Requires FAD as cofactor.

It functions in the pathway secondary metabolite biosynthesis. Monooxygenase; part of the gene cluster that mediates the biosynthesis of the indole diterpenes penitrems. The geranylgeranyl diphosphate (GGPP) synthase penG catalyzes the first step in penitrem biosynthesis via conversion of farnesyl pyrophosphate and isopentyl pyrophosphate into geranylgeranyl pyrophosphate (GGPP). Condensation of indole-3-glycerol phosphate with GGPP by the prenyl transferase penC then forms 3-geranylgeranylindole (3-GGI). Epoxidation by the FAD-dependent monooxygenase penM leads to a epoxidized-GGI that is substrate of the terpene cyclase penB for cyclization to yield paspaline. Paspaline is subsequently converted to 13-desoxypaxilline by the cytochrome P450 monooxygenase penP, the latter being then converted to paxilline by the cytochrome P450 monooxygenase penQ. Paxilline is converted to beta-paxitriol via C-10 ketoreduction by the short-chain dehydrogenase PC-15 which can be monoprenylated at the C-20 by the indole diterpene prenyltransferase penD. A two-step elimination (acetylation and elimination) process performed by the O-acetyltransferase PC-16 and the P.simplicissimum ptmI-ortholog not yet identified in P.crustosum, leads to the production of the prenylated form of penijanthine. The FAD-linked oxidoreductase ptmO then converts the prenylated form of penijanthine into PC-M5 which is in turn transformed into PC-M4 by the aromatic dimethylallyltransferase PC-22. A series of oxidation steps involving 4 cytochrome P450 monooxygenases (PC-21, PC-05, PC-23, PC-20) and a FAD-dependent monooxygenase (PC-14) are required for the transformation of PC-M4 to penitrems A and E. Synthesis of these final products is proposed to proceed via penitrems D and C (PC-21, PC-05, PC-14) and penitrems B and F (PC-21, PC-05, PC-14, PC-23). The protein is Monooxygenase PC-14 of Penicillium crustosum (Blue mold fungus).